The chain runs to 400 residues: NADH dehydrogenase-like protein MT1860 (400 aa).

This sequence belongs to the NADH dehydrogenase family. Requires FAD as cofactor.

This Mycobacterium tuberculosis (strain CDC 1551 / Oshkosh) protein is NADH dehydrogenase-like protein MT1860.